Reading from the N-terminus, the 56-residue chain is uncharacterized protein (56 aa).

Residues His21–Pro38 show a composition bias toward basic residues. The segment at His21–His40 is disordered.

This is an uncharacterized protein from Saccharomyces cerevisiae (strain ATCC 204508 / S288c) (Baker's yeast).